The chain runs to 2105 residues: Autophagy-related protein 2 (2105 aa).

Disordered regions lie at residues 108–199 (ASSG…ELGI), 312–384 (LKSP…GRFS), 432–538 (FQSS…SVVE), 573–650 (GWES…KSPS), and 2086–2105 (AGNS…YKRH). 2 stretches are compositionally biased toward basic and acidic residues: residues 111 to 121 (GDDRELCRPFD) and 163 to 172 (SEPKEEKAEL). Composition is skewed to low complexity over residues 336–352 (SSPA…LVMS) and 434–443 (SSPPSISDPT). Polar residues-rich tracts occupy residues 471-482 (MESSTHSTNHPS), 509-534 (SDNV…SESA), 584-606 (RNVS…TSEG), and 632-641 (LLSNPNQSGL). Residues 2093-2105 (TNRRRVEDKYKRH) are compositionally biased toward basic and acidic residues.

It belongs to the ATG2 family.

The protein resides in the preautophagosomal structure membrane. It is found in the endoplasmic reticulum membrane. The catalysed reaction is a 1,2-diacyl-sn-glycero-3-phosphocholine(in) = a 1,2-diacyl-sn-glycero-3-phosphocholine(out). The enzyme catalyses a 1,2-diacyl-sn-glycero-3-phospho-L-serine(in) = a 1,2-diacyl-sn-glycero-3-phospho-L-serine(out). It catalyses the reaction a 1,2-diacyl-sn-glycero-3-phosphoethanolamine(in) = a 1,2-diacyl-sn-glycero-3-phosphoethanolamine(out). Its function is as follows. Lipid transfer protein required for autophagosome completion and peroxisome degradation. Tethers the edge of the isolation membrane (IM) to the endoplasmic reticulum (ER) and mediates direct lipid transfer from ER to IM for IM expansion. ATG2 binds to the ER exit site (ERES), which is the membrane source for autophagosome formation, using basic residues in its N-terminal region (NR) and to the expanding edge of the IM through its C-terminal region. The latter binding is assisted by an ATG18-PtdIns3P interaction. ATG2 then extracts phospholipids from the membrane source using its NR and transfers them to ATG9 to the IM through its predicted beta-sheet-rich structure for membrane expansion. The sequence is that of Autophagy-related protein 2 (ATG2) from Ajellomyces capsulatus (strain NAm1 / WU24) (Darling's disease fungus).